We begin with the raw amino-acid sequence, 332 residues long: 3-dehydroquinate synthase (332 aa).

Residues 55–60 (DGEEYK), 89–93 (GVITD), 113–114 (TT), Lys126, Lys134, and 152–155 (TLST) each bind NAD(+). Zn(2+) contacts are provided by Glu167, His226, and His242.

The protein belongs to the sugar phosphate cyclases superfamily. Dehydroquinate synthase family. The cofactor is NAD(+). Co(2+) serves as cofactor. Requires Zn(2+) as cofactor.

It localises to the cytoplasm. The catalysed reaction is 7-phospho-2-dehydro-3-deoxy-D-arabino-heptonate = 3-dehydroquinate + phosphate. It functions in the pathway metabolic intermediate biosynthesis; chorismate biosynthesis; chorismate from D-erythrose 4-phosphate and phosphoenolpyruvate: step 2/7. Catalyzes the conversion of 3-deoxy-D-arabino-heptulosonate 7-phosphate (DAHP) to dehydroquinate (DHQ). The protein is 3-dehydroquinate synthase of Pyrococcus abyssi (strain GE5 / Orsay).